A 983-amino-acid chain; its full sequence is Bifunctional glutamine synthetase adenylyltransferase/adenylyl-removing enzyme (983 aa).

Residues 1-468 (MTVENAKALF…KQYAALFEQA (468 aa)) form an adenylyl removase region. Positions 473-983 (AASGNLVFTG…FDKLVGHGAD (511 aa)) are adenylyl transferase.

It belongs to the GlnE family. Mg(2+) serves as cofactor.

It catalyses the reaction [glutamine synthetase]-O(4)-(5'-adenylyl)-L-tyrosine + phosphate = [glutamine synthetase]-L-tyrosine + ADP. The catalysed reaction is [glutamine synthetase]-L-tyrosine + ATP = [glutamine synthetase]-O(4)-(5'-adenylyl)-L-tyrosine + diphosphate. Involved in the regulation of glutamine synthetase GlnA, a key enzyme in the process to assimilate ammonia. When cellular nitrogen levels are high, the C-terminal adenylyl transferase (AT) inactivates GlnA by covalent transfer of an adenylyl group from ATP to specific tyrosine residue of GlnA, thus reducing its activity. Conversely, when nitrogen levels are low, the N-terminal adenylyl removase (AR) activates GlnA by removing the adenylyl group by phosphorolysis, increasing its activity. The regulatory region of GlnE binds the signal transduction protein PII (GlnB) which indicates the nitrogen status of the cell. The polypeptide is Bifunctional glutamine synthetase adenylyltransferase/adenylyl-removing enzyme (Brucella melitensis biotype 1 (strain ATCC 23456 / CCUG 17765 / NCTC 10094 / 16M)).